The chain runs to 278 residues: Complement C1q tumor necrosis factor-related protein 6 (278 aa).

The signal sequence occupies residues Met-1–Leu-46. Asn-91 carries an N-linked (GlcNAc...) asparagine glycan. Positions Gly-97–Pro-138 constitute a Collagen-like domain. The disordered stretch occupies residues Lys-99 to Pro-135. The region spanning Cys-139–Ser-259 is the C1q domain.

The protein resides in the secreted. The sequence is that of Complement C1q tumor necrosis factor-related protein 6 (C1QTNF6) from Homo sapiens (Human).